Here is a 132-residue protein sequence, read N- to C-terminus: NADPH-dependent 7-cyano-7-deazaguanine reductase (132 aa).

The active-site Thioimide intermediate is the cysteine 48. The active-site Proton donor is aspartate 55. Substrate contacts are provided by residues 70 to 72 (LEL) and 89 to 90 (ME).

Belongs to the GTP cyclohydrolase I family. QueF type 1 subfamily.

The protein localises to the cytoplasm. It carries out the reaction 7-aminomethyl-7-carbaguanine + 2 NADP(+) = 7-cyano-7-deazaguanine + 2 NADPH + 3 H(+). It participates in tRNA modification; tRNA-queuosine biosynthesis. Its function is as follows. Catalyzes the NADPH-dependent reduction of 7-cyano-7-deazaguanine (preQ0) to 7-aminomethyl-7-deazaguanine (preQ1). This chain is NADPH-dependent 7-cyano-7-deazaguanine reductase, found in Elusimicrobium minutum (strain Pei191).